We begin with the raw amino-acid sequence, 399 residues long: Phosphoglycerate kinase (399 aa).

Residues 22–24 (DFN), R38, 61–64 (HLGR), R120, and R153 each bind substrate. Residues K204, E326, and 352–355 (GGDT) contribute to the ATP site.

This sequence belongs to the phosphoglycerate kinase family. In terms of assembly, monomer.

It is found in the cytoplasm. It catalyses the reaction (2R)-3-phosphoglycerate + ATP = (2R)-3-phospho-glyceroyl phosphate + ADP. The protein operates within carbohydrate degradation; glycolysis; pyruvate from D-glyceraldehyde 3-phosphate: step 2/5. The polypeptide is Phosphoglycerate kinase (Geobacter sp. (strain M21)).